A 306-amino-acid chain; its full sequence is tRNA dimethylallyltransferase (306 aa).

An ATP-binding site is contributed by 12-19 (GPTGTKKS).

The protein belongs to the IPP transferase family. In terms of assembly, monomer. Requires Mg(2+) as cofactor.

It carries out the reaction adenosine(37) in tRNA + dimethylallyl diphosphate = N(6)-dimethylallyladenosine(37) in tRNA + diphosphate. Catalyzes the transfer of a dimethylallyl group onto the adenine at position 37 in tRNAs that read codons beginning with uridine, leading to the formation of N6-(dimethylallyl)adenosine (i(6)A). The polypeptide is tRNA dimethylallyltransferase (Mycoplasmoides gallisepticum (strain R(low / passage 15 / clone 2)) (Mycoplasma gallisepticum)).